The following is a 697-amino-acid chain: MCRSLRYCVSHCLYLAMTRLEEVNREVNMHSSVRYLGYLARINLLVAICLGLYVRWEKTANSLILVIFILGLFVLGIASILYYYFSMEAASLSLSNLWFGFLLGLLCFLDNSSFKSDVKEETTKYLLLTSIVLRILCALVERISGYVRHRPTLLTTVEFLELVGFAIASTTMLVEKSLSVILLVMALAMLIIDLRMKSFLAIPNLIIFSVLLFFSSLETPQNPIAFACFFICLVTDPFLDIYFSGLSVTERWKPFLHRGRICRRLSVLFTAMIELTFFILSAFKLRDTHLWYFVIPGFSIFGFFWMICHIIFLLTLWGFHTKLNDCHKVYINHRADNNSLDRIMASKGMRHFCLISEQLVFFSLLATAILGAVSWQPTNGIFLSMFLIVLPLESMAHGLFHELGNCLGGTSVGYAIVIPTNFCSPDGQPTLLPPEHVQELNLRSTGMLNAIQRFFAYHMIETYGCDYSTSGLSFDTLHSKLKAFLELRTVDGPRHDTYVLYYSGHTHGSGEWALAGGDILRLDTLLEWWREKNGSFCSRLIIILDSENSTPWVKEVRKINDQYVAVQGAELAKTVDIEEADPPQLGDFTRDWVEYNCNSTNNICWTEKGRTVRAVYGVSKRWSDYTLHLPTGSDVAKHWMLHFPRVTYPLVHLANWLCGLNLFWVCKACFRCLKRLKMSWFLPTVLDTGQGFKLVKS.

Transmembrane regions (helical) follow at residues 36-56 (LGYLARINLLVAICLGLYVRW), 63-83 (LILVIFILGLFVLGIASILYY), and 89-109 (AASLSLSNLWFGFLLGLLCFL). Asn111 carries N-linked (GlcNAc...) asparagine glycosylation. A run of 5 helical transmembrane segments spans residues 172-192 (MLVEKSLSVILLVMALAMLII), 199-219 (FLAIPNLIIFSVLLFFSSLET), 223-243 (PIAFACFFICLVTDPFLDIYF), 265-285 (LSVLFTAMIELTFFILSAFKL), and 293-313 (FVIPGFSIFGFFWMICHIIFL). The N-linked (GlcNAc...) asparagine glycan is linked to Asn337. Transmembrane regions (helical) follow at residues 352 to 372 (FCLISEQLVFFSLLATAILGA) and 380 to 400 (GIFLSMFLIVLPLESMAHGLF). Residues Asn533 and Asn598 are each glycosylated (N-linked (GlcNAc...) asparagine).

The protein belongs to the TMEM168 family.

The protein localises to the nucleus membrane. Plays a key role in maintaining the cardiac electrical stability by modulating cell surface expression of SCN5A. Plays a role i the modulation of anxiety behavior by regulating GABAergic neuronal system in the nucleus accumbens. This chain is Transmembrane protein 168 (Tmem168), found in Mus musculus (Mouse).